The sequence spans 124 residues: Small ribosomal subunit protein uS12 (124 aa).

Residue D89 is modified to 3-methylthioaspartic acid.

Belongs to the universal ribosomal protein uS12 family. As to quaternary structure, part of the 30S ribosomal subunit. Contacts proteins S8 and S17. May interact with IF1 in the 30S initiation complex.

Functionally, with S4 and S5 plays an important role in translational accuracy. Interacts with and stabilizes bases of the 16S rRNA that are involved in tRNA selection in the A site and with the mRNA backbone. Located at the interface of the 30S and 50S subunits, it traverses the body of the 30S subunit contacting proteins on the other side and probably holding the rRNA structure together. The combined cluster of proteins S8, S12 and S17 appears to hold together the shoulder and platform of the 30S subunit. In Vibrio atlanticus (strain LGP32) (Vibrio splendidus (strain Mel32)), this protein is Small ribosomal subunit protein uS12.